The primary structure comprises 395 residues: S-adenosylmethionine synthase (395 aa).

His16 is an ATP binding site. Position 18 (Asp18) interacts with Mg(2+). Position 44 (Glu44) interacts with K(+). Positions 57 and 100 each coordinate L-methionine. Residues 100-110 (QSPDIAQGVDR) form a flexible loop region. ATP contacts are provided by residues 167-169 (DAK), 233-234 (RF), Asp242, 248-249 (RK), Ala265, and Lys269. Asp242 lines the L-methionine pocket. Position 273 (Lys273) interacts with L-methionine.

This sequence belongs to the AdoMet synthase family. As to quaternary structure, homotetramer; dimer of dimers. It depends on Mg(2+) as a cofactor. K(+) serves as cofactor.

The protein localises to the cytoplasm. It catalyses the reaction L-methionine + ATP + H2O = S-adenosyl-L-methionine + phosphate + diphosphate. It functions in the pathway amino-acid biosynthesis; S-adenosyl-L-methionine biosynthesis; S-adenosyl-L-methionine from L-methionine: step 1/1. Its function is as follows. Catalyzes the formation of S-adenosylmethionine (AdoMet) from methionine and ATP. The overall synthetic reaction is composed of two sequential steps, AdoMet formation and the subsequent tripolyphosphate hydrolysis which occurs prior to release of AdoMet from the enzyme. This is S-adenosylmethionine synthase from Burkholderia mallei (strain NCTC 10247).